The primary structure comprises 321 residues: Ferrochelatase (321 aa).

Residues H194 and E275 each contribute to the Fe cation site.

The protein belongs to the ferrochelatase family.

It localises to the cytoplasm. The catalysed reaction is heme b + 2 H(+) = protoporphyrin IX + Fe(2+). It functions in the pathway porphyrin-containing compound metabolism; protoheme biosynthesis; protoheme from protoporphyrin-IX: step 1/1. In terms of biological role, catalyzes the ferrous insertion into protoporphyrin IX. In Wigglesworthia glossinidia brevipalpis, this protein is Ferrochelatase.